The chain runs to 218 residues: uncharacterized protein (218 aa).

This is an uncharacterized protein from Mycoplasma genitalium (strain ATCC 33530 / DSM 19775 / NCTC 10195 / G37) (Mycoplasmoides genitalium).